The chain runs to 348 residues: NADH-quinone oxidoreductase subunit H (348 aa).

The next 8 helical transmembrane spans lie at 21–41, 87–107, 120–140, 166–186, 193–213, 258–278, 283–303, and 323–343; these read IIGI…IIYA, GLFL…WAVI, IGLL…IIAG, IGFV…SAIV, IFGF…AVVF, NVIL…LPPV, LYMV…FFVF, and WKVF…WLML.

Belongs to the complex I subunit 1 family. NDH-1 is composed of 14 different subunits. Subunits NuoA, H, J, K, L, M, N constitute the membrane sector of the complex.

The protein resides in the cell inner membrane. The catalysed reaction is a quinone + NADH + 5 H(+)(in) = a quinol + NAD(+) + 4 H(+)(out). Its function is as follows. NDH-1 shuttles electrons from NADH, via FMN and iron-sulfur (Fe-S) centers, to quinones in the respiratory chain. The immediate electron acceptor for the enzyme in this species is believed to be ubiquinone. Couples the redox reaction to proton translocation (for every two electrons transferred, four hydrogen ions are translocated across the cytoplasmic membrane), and thus conserves the redox energy in a proton gradient. This subunit may bind ubiquinone. In Rhizorhabdus wittichii (strain DSM 6014 / CCUG 31198 / JCM 15750 / NBRC 105917 / EY 4224 / RW1) (Sphingomonas wittichii), this protein is NADH-quinone oxidoreductase subunit H.